Here is a 597-residue protein sequence, read N- to C-terminus: MTPIVTVLICLGLSLGPRTRVQTGTIPKPTLWAEPDSVITQGSPVTLSCQGSLEAQEYRLYREKKSASWITRIRPELVKNGQFHIPSITWEHTGRYGCQYYSRARWSELSDPLVLVMTGAYPKPTLSAQPSPVVTSGGRVTLQCESQVAFGGFILCKEGEDEHPQCLNSQPHARGSSRAIFSVGPVSPNRRWSHRCYGYDLNSPYVWSSPSDLLELLVPGVSKKPSLSVQPGPVMAPGESLTLQCVSDVGYDRFVLYKEGERDLRQLPGRQPQAGLSQANFTLGPVSRSYGGQYRCYGAHNLSSECSAPSDPLDILITGQIRGTPFISVQPGPTVASGENVTLLCQSWRQFHTFLLTKAGAADAPLRLRSIHEYPKYQAEFPMSPVTSAHAGTYRCYGSLNSDPYLLSHPSEPLELVVSGPSMGSSPPPTGPISTPGPEDQPLTPTGSDPQSGLGRHLGVVIGILVAVVLLLLLLLLLFLILRHRRQGKHWTSTQRKADFQHPAGAVGPEPTDRGLQWRSSPAADAQEENLYAAVKDTQPEDGVEMDTRAAASEAPQDVTYAQLHSLTLRRKATEPPPSQEREPPAEPSIYATLAIH.

The first 21 residues, M1–V21, serve as a signal peptide directing secretion. Over Q22–V460 the chain is Extracellular. Ig-like C2-type domains follow at residues P27–S110, D111–V229, Q230–T318, and Q330–S419. 4 disulfides stabilise this stretch: C49-C98, C144-C196, C156-C166, and C245-C296. Residues N280, N301, and N340 are each glycosylated (N-linked (GlcNAc...) asparagine). Cysteines 345 and 396 form a disulfide. Residues V417 to Q451 form a disordered region. A helical transmembrane segment spans residues V461–I481. Residues L482 to H597 lie on the Cytoplasmic side of the membrane. Residues W491–A523 form a disordered region. 3 short sequence motifs (ITIM motif) span residues N530 to V535, V559 to L564, and S589 to L594. A disordered region spans residues D537 to H597.

Binds PTPN6 when phosphorylated. Binds FCGR1A. Interacts with peptide-bound HLA-G-B2M; this interaction is direct. Interacts with peptide-bound HLA-F-B2M; this interaction is direct. Phosphorylated on tyrosine residues. Dephosphorylated by PTPN6. Expressed in monocytes and at lower levels in myeloid and plasmacytoid dendritic cells. Expressed in tolerogenic IL10-producing dendritic cells. Expressed in myeloid-derived suppressor cells during pregnancy. Detected at low levels in natural killer (NK) cells. Expressed in B cells.

The protein localises to the cell membrane. In terms of biological role, receptor for class I MHC antigens. Recognizes a broad spectrum of HLA-A, HLA-B, HLA-C, HLA-G and HLA-F alleles. Involved in the down-regulation of the immune response and the development of tolerance. Recognizes HLA-G in complex with B2M/beta-2 microglobulin and a nonamer self-peptide (peptide-bound HLA-G-B2M) triggering differentiation of type 1 regulatory T cells and myeloid-derived suppressor cells, both of which actively maintain maternal-fetal tolerance. Competes with CD8A for binding to class I MHC antigens. Inhibits FCGR1A-mediated phosphorylation of cellular proteins and mobilization of intracellular calcium ions. In Homo sapiens (Human), this protein is Leukocyte immunoglobulin-like receptor subfamily B member 2.